The following is a 342-amino-acid chain: NAD kinase (342 aa).

Asp-66 (proton acceptor) is an active-site residue. NAD(+)-binding positions include Asp-66–Gly-67, Arg-71, Asn-141–Asp-142, Lys-152, Asp-171, Thr-182–Ser-187, and Ala-206.

Belongs to the NAD kinase family. It depends on a divalent metal cation as a cofactor.

Its subcellular location is the cytoplasm. It carries out the reaction NAD(+) + ATP = ADP + NADP(+) + H(+). Involved in the regulation of the intracellular balance of NAD and NADP, and is a key enzyme in the biosynthesis of NADP. Catalyzes specifically the phosphorylation on 2'-hydroxyl of the adenosine moiety of NAD to yield NADP. The sequence is that of NAD kinase from Bifidobacterium longum (strain NCC 2705).